Reading from the N-terminus, the 241-residue chain is Tetraspanin-1 (241 aa).

Topologically, residues 1–11 (MGCFNFIKVMM) are cytoplasmic. A helical membrane pass occupies residues 12 to 32 (ILFNMLIFLCGAALLAVGIWV). Residues 33 to 52 (SVDGPSFVKIFGPMSSSAMQ) are Extracellular-facing. A helical transmembrane segment spans residues 53 to 73 (FVNVGYFLIAAGAVLFALGFL). Residues 74-88 (GCYGAQTESKCALMT) are Cytoplasmic-facing. The helical transmembrane segment at 89 to 109 (FFFILLLIFIAEVAAAVVALV) threads the bilayer. The Extracellular portion of the chain corresponds to 110-211 (YTTLAENFLT…KQLLYDIRTN (102 aa)). Asparagine 141, asparagine 154, asparagine 167, asparagine 180, asparagine 189, and asparagine 194 each carry an N-linked (GlcNAc...) asparagine glycan. Residues 212–232 (AVTVGGVAAGIGGLELAAMIV) traverse the membrane as a helical segment. Over 233–241 (SMYLYCNLE) the chain is Cytoplasmic.

Belongs to the tetraspanin (TM4SF) family. Interacts with SLC19A2. Interacts with NTRK1/TRKA.

It is found in the lysosome membrane. Functionally, structural component of specialized membrane microdomains known as tetraspanin-enriched microdomains (TERMs), which act as platforms for receptor clustering and signaling. Participates thereby in diverse biological functions such as cell signal transduction, adhesion, migration and protein trafficking. Regulates neuronal differentiation in response to NGF by facilitating NGF-mediated activation of NTRK1/TRKA receptor tyrosine kinase and subsequent downstream signaling pathways. Plays a role in the inhibition of TNFalpha-induced apoptosis. Mechanistically, inhibits the NF-kappa-B signaling pathway by blocking phosphorylation of CHUK. Also promotes the stability of the thiamine transporter 1/SLC19A2 in intestinal epithelial cells leading to an increase of thiamine uptake process. In Bos taurus (Bovine), this protein is Tetraspanin-1 (TSPAN1).